A 1044-amino-acid polypeptide reads, in one-letter code: Probable pre-mRNA-splicing factor ATP-dependent RNA helicase DEAH6 (1044 aa).

Disordered stretches follow at residues 99-134 (EADHDEDENNVKKQSASKTGKSDKGQKRFRKKSEQL) and 152-211 (RRKV…VRRD). Acidic residues predominate over residues 157–167 (EDEDDGTESEE). A compositionally biased stretch (basic and acidic residues) spans 168-211 (ERLRDQREREELEQHLRERDTARTRKLTEPKMSKKEQEEFVRRD). Residues 414–577 (LNAVKDHQVL…FDQAPIFRFP (164 aa)) enclose the Helicase ATP-binding domain. 427–434 (GETGSGKT) lines the ATP pocket. Positions 524-527 (DEAH) match the DEAH box motif. Residues 599–775 (AITTVLTIHV…SVVLSLKSLG (177 aa)) enclose the Helicase C-terminal domain.

Belongs to the DEAD box helicase family. DEAH subfamily. PRP2 sub-subfamily. As to expression, predominantly expressed in flowers.

It catalyses the reaction ATP + H2O = ADP + phosphate + H(+). Its function is as follows. May be involved in pre-mRNA splicing. In Arabidopsis thaliana (Mouse-ear cress), this protein is Probable pre-mRNA-splicing factor ATP-dependent RNA helicase DEAH6.